Here is a 676-residue protein sequence, read N- to C-terminus: RNA helicase NPH-II (676 aa).

In terms of domain architecture, Helicase ATP-binding spans 172-347 (FSAWISHRPV…VFLPNPAFIH (176 aa)). Residue 185-192 (GGTGVGKT) coordinates ATP. The DEXH box motif lies at 296 to 299 (DEVH). The Helicase C-terminal domain occupies 366 to 535 (NPSSRMAYIE…NYILYANKFN (170 aa)).

It belongs to the DEAD box helicase family. DEAH subfamily. Monomer.

The protein localises to the virion. It carries out the reaction ATP + H2O = ADP + phosphate + H(+). Its function is as follows. NTP-dependent helicase that catalyzes unidirectional unwinding of 3'tailed duplex RNAs and plays an important role during transcription of early mRNAs, presumably by preventing R-loop formation behind the elongating RNA polymerase. Might also play a role in the export of newly synthesized mRNA chains out of the core into the cytoplasm. Required for replication and propagation of viral particles. The chain is RNA helicase NPH-II (OPG084) from Vaccinia virus (strain Copenhagen) (VACV).